Here is a 518-residue protein sequence, read N- to C-terminus: Glutamate--cysteine ligase (518 aa).

The protein belongs to the glutamate--cysteine ligase type 1 family. Type 1 subfamily.

The catalysed reaction is L-cysteine + L-glutamate + ATP = gamma-L-glutamyl-L-cysteine + ADP + phosphate + H(+). Its pathway is sulfur metabolism; glutathione biosynthesis; glutathione from L-cysteine and L-glutamate: step 1/2. The sequence is that of Glutamate--cysteine ligase from Salmonella agona (strain SL483).